A 178-amino-acid chain; its full sequence is NADH-quinone oxidoreductase subunit B 1 (178 aa).

4 residues coordinate [4Fe-4S] cluster: C39, C40, C104, and C135.

The protein belongs to the complex I 20 kDa subunit family. NDH-1 is composed of 14 different subunits. Subunits NuoB, C, D, E, F, and G constitute the peripheral sector of the complex. [4Fe-4S] cluster serves as cofactor.

It localises to the cell inner membrane. It carries out the reaction a quinone + NADH + 5 H(+)(in) = a quinol + NAD(+) + 4 H(+)(out). NDH-1 shuttles electrons from NADH, via FMN and iron-sulfur (Fe-S) centers, to quinones in the respiratory chain. The immediate electron acceptor for the enzyme in this species is believed to be a menaquinone. Couples the redox reaction to proton translocation (for every two electrons transferred, four hydrogen ions are translocated across the cytoplasmic membrane), and thus conserves the redox energy in a proton gradient. This Cytophaga hutchinsonii (strain ATCC 33406 / DSM 1761 / CIP 103989 / NBRC 15051 / NCIMB 9469 / D465) protein is NADH-quinone oxidoreductase subunit B 1.